The chain runs to 127 residues: MVKRIKNMSELKELFSDAGNKLVVVEFSAKWCGPCKTIAPVFQAMSLKYQNVTFAQVDVDSSKELAEHCDITMLPTFQMFKYTQKVTPFSRLKRVLCCLRSGPKSKMIFECHGADAKQLEKKIQELM.

Residues 2 to 127 (VKRIKNMSEL…QLEKKIQELM (126 aa)) form the Thioredoxin domain. The cysteines at positions 32 and 35 are disulfide-linked.

It belongs to the thioredoxin family. Testis-specific. Only expressed during spermiogenesis, prominently in the Golgi apparatus of pachytene spermatocytes and round and elongated spermatids, with a transient localization in the developing acrosome of round spermatids (at protein level).

It is found in the cytoplasm. The protein localises to the golgi apparatus. May be required for post-translational modifications of proteins required for acrosomal biogenesis. May act by reducing disulfide bonds within the sperm. The chain is Thioredoxin domain-containing protein 8 (Txndc8) from Mus musculus (Mouse).